The primary structure comprises 492 residues: 2-succinylbenzoate--CoA ligase (492 aa).

This sequence belongs to the ATP-dependent AMP-binding enzyme family. MenE subfamily.

It catalyses the reaction 2-succinylbenzoate + ATP + CoA = 2-succinylbenzoyl-CoA + AMP + diphosphate. Its pathway is quinol/quinone metabolism; 1,4-dihydroxy-2-naphthoate biosynthesis; 1,4-dihydroxy-2-naphthoate from chorismate: step 5/7. It functions in the pathway quinol/quinone metabolism; menaquinone biosynthesis. Converts 2-succinylbenzoate (OSB) to 2-succinylbenzoyl-CoA (OSB-CoA). In Staphylococcus aureus (strain MSSA476), this protein is 2-succinylbenzoate--CoA ligase.